Here is a 470-residue protein sequence, read N- to C-terminus: Uronate isomerase (470 aa).

It belongs to the metallo-dependent hydrolases superfamily. Uronate isomerase family.

It catalyses the reaction D-glucuronate = D-fructuronate. The enzyme catalyses aldehydo-D-galacturonate = keto-D-tagaturonate. It functions in the pathway carbohydrate metabolism; pentose and glucuronate interconversion. In Shigella boydii serotype 18 (strain CDC 3083-94 / BS512), this protein is Uronate isomerase.